The following is an 89-amino-acid chain: Pigment-dispersing hormone peptides (89 aa).

Positions 1–22 (MTAMAVSGKLLTALVLSTYILG) are cleaved as a signal peptide. Ala-86 is modified (alanine amide).

This sequence belongs to the arthropod PDH family.

It localises to the secreted. Capable of inducing pigment dispersion in the chromatophores of the fiddler crab Uca pugilator. The polypeptide is Pigment-dispersing hormone peptides (Romalea microptera (Eastern lubber grasshopper)).